The following is a 289-amino-acid chain: tRNA pseudouridine synthase B (289 aa).

D38 functions as the Nucleophile in the catalytic mechanism.

The protein belongs to the pseudouridine synthase TruB family. Type 1 subfamily.

The enzyme catalyses uridine(55) in tRNA = pseudouridine(55) in tRNA. In terms of biological role, responsible for synthesis of pseudouridine from uracil-55 in the psi GC loop of transfer RNAs. The polypeptide is tRNA pseudouridine synthase B (Acaryochloris marina (strain MBIC 11017)).